The chain runs to 264 residues: MQEFMNFEECSKQNTNNCKQHEKNIDENNCSCKEKKVQSKKVSSDHSSSEDNASSDINSNKAETLTLNCGDQSDNKNSISDIESNKFIPNENDFQMLKKQLNDLKAENVNLKRDLQEAHQQRTNDNLKYLADFDNFKKRITVQTNREIKYALTDFIKNILIPLEQFEKVLEMPKVDDSVKSFLLGFKMIHKQVKDILQKEGVEEIKALGVKFDPNFHYALEKISDLKQPNGINVLVLQKGFLYKDLVIKPAMVKVNEWSDKNND.

A compositionally biased stretch (basic and acidic residues) spans Lys36–Ser49. The segment at Lys36 to Ser59 is disordered. Over residues Glu50 to Ser59 the composition is skewed to low complexity.

It belongs to the GrpE family. As to quaternary structure, homodimer.

It localises to the cytoplasm. Its function is as follows. Participates actively in the response to hyperosmotic and heat shock by preventing the aggregation of stress-denatured proteins, in association with DnaK and GrpE. It is the nucleotide exchange factor for DnaK and may function as a thermosensor. Unfolded proteins bind initially to DnaJ; upon interaction with the DnaJ-bound protein, DnaK hydrolyzes its bound ATP, resulting in the formation of a stable complex. GrpE releases ADP from DnaK; ATP binding to DnaK triggers the release of the substrate protein, thus completing the reaction cycle. Several rounds of ATP-dependent interactions between DnaJ, DnaK and GrpE are required for fully efficient folding. This chain is Protein GrpE, found in Peanut witches'-broom phytoplasma.